We begin with the raw amino-acid sequence, 443 residues long: Thymidine phosphorylase (443 aa).

The protein belongs to the thymidine/pyrimidine-nucleoside phosphorylase family. As to quaternary structure, homodimer.

It carries out the reaction thymidine + phosphate = 2-deoxy-alpha-D-ribose 1-phosphate + thymine. It participates in pyrimidine metabolism; dTMP biosynthesis via salvage pathway; dTMP from thymine: step 1/2. Its function is as follows. The enzymes which catalyze the reversible phosphorolysis of pyrimidine nucleosides are involved in the degradation of these compounds and in their utilization as carbon and energy sources, or in the rescue of pyrimidine bases for nucleotide synthesis. The protein is Thymidine phosphorylase of Shewanella piezotolerans (strain WP3 / JCM 13877).